The following is a 452-amino-acid chain: Tubulin alpha-6 chain (452 aa).

8 residues coordinate GTP: Gln-11, Glu-69, Ser-138, Gly-142, Thr-143, Thr-177, Asn-204, and Asn-226. Glu-69 serves as a coordination point for Mg(2+). The active site involves Glu-252.

Belongs to the tubulin family. Dimer of alpha and beta chains. A typical microtubule is a hollow water-filled tube with an outer diameter of 25 nm and an inner diameter of 15 nM. Alpha-beta heterodimers associate head-to-tail to form protofilaments running lengthwise along the microtubule wall with the beta-tubulin subunit facing the microtubule plus end conferring a structural polarity. Microtubules usually have 13 protofilaments but different protofilament numbers can be found in some organisms and specialized cells. Mg(2+) is required as a cofactor.

The protein resides in the cytoplasm. It is found in the cytoskeleton. Its subcellular location is the spindle. The catalysed reaction is GTP + H2O = GDP + phosphate + H(+). Functionally, tubulin is the major constituent of microtubules, a cylinder consisting of laterally associated linear protofilaments composed of alpha- and beta-tubulin heterodimers. Microtubules grow by the addition of GTP-tubulin dimers to the microtubule end, where a stabilizing cap forms. Below the cap, tubulin dimers are in GDP-bound state, owing to GTPase activity of alpha-tubulin. The protein is Tubulin alpha-6 chain (TUBA6) of Naegleria pringsheimi (Amoeba).